A 231-amino-acid chain; its full sequence is Flagellar L-ring protein (231 aa).

The first 20 residues, methionine 1 to glycine 20, serve as a signal peptide directing secretion. Cysteine 21 is lipidated: N-palmitoyl cysteine. Cysteine 21 carries the S-diacylglycerol cysteine lipid modification.

It belongs to the FlgH family. As to quaternary structure, the basal body constitutes a major portion of the flagellar organelle and consists of four rings (L,P,S, and M) mounted on a central rod.

The protein localises to the cell outer membrane. The protein resides in the bacterial flagellum basal body. Functionally, assembles around the rod to form the L-ring and probably protects the motor/basal body from shearing forces during rotation. In Desulfotalea psychrophila (strain LSv54 / DSM 12343), this protein is Flagellar L-ring protein.